The sequence spans 85 residues: Insect toxin 2-53 (85 aa).

A signal peptide spans 1–21; sequence MKLLLLLIVSASMLIESLVNA. The LCN-type CS-alpha/beta domain occupies 22 to 82; the sequence is DGYIKRRDGC…TWKSETNTCG (61 aa). 4 disulfide bridges follow: cysteine 31–cysteine 81, cysteine 35–cysteine 56, cysteine 42–cysteine 63, and cysteine 46–cysteine 65. Glycine 82 bears the Glycine amide mark.

The protein belongs to the long (4 C-C) scorpion toxin superfamily. Sodium channel inhibitor family. Beta subfamily. Expressed by the venom gland.

It is found in the secreted. Its function is as follows. Depressant insect toxins cause a transient contraction paralysis followed by a slow flaccid paralysis. They bind voltage-independently to sodium channels (Nav) and block action potentials, primarily by depolarizing the axonal membrane and suppressing the sodium current. This is Insect toxin 2-53 from Leiurus hebraeus (Hebrew deathstalker scorpion).